Consider the following 148-residue polypeptide: Cytochrome c-type biogenesis protein CcmE (148 aa).

At 1-7 the chain is on the cytoplasmic side; the sequence is MTRKQRR. The chain crosses the membrane as a helical; Signal-anchor for type II membrane protein span at residues 8–28; that stretch reads LYFVLLGMAALGGAVALVLTA. Over 29–148 the chain is Periplasmic; the sequence is ISDSLVYFYS…QWNDGKQPKQ (120 aa). Heme is bound by residues His121 and Tyr125.

The protein belongs to the CcmE/CycJ family.

It localises to the cell inner membrane. Functionally, heme chaperone required for the biogenesis of c-type cytochromes. Transiently binds heme delivered by CcmC and transfers the heme to apo-cytochromes in a process facilitated by CcmF and CcmH. This Paramagnetospirillum magneticum (strain ATCC 700264 / AMB-1) (Magnetospirillum magneticum) protein is Cytochrome c-type biogenesis protein CcmE.